We begin with the raw amino-acid sequence, 313 residues long: NF-kappa-B inhibitor delta (313 aa).

6 ANK repeats span residues 48-83 (EGDT…IREH), 84-113 (KGKT…EPNA), 117-146 (QGRS…QVDL), 152-201 (EGLT…NHTS), 206-236 (SNKT…DLRT), and 243-276 (HGNT…DPTL).

This sequence belongs to the NF-kappa-B inhibitor family. In terms of assembly, interacts with NFKB1, RELA and RELB; in the nucleus.

It is found in the nucleus. Functionally, regulates the expression of IL-2, IL-6, and other cytokines through regulation on NF-kappa-B activity. Functions in the regulation of inflammatory responses. Involved in the induction of T helper 17 cells (Th17) differentiation upon recognition of antigen by T cell antigen receptor (TCR). May also regulate TCR-induced negative selection of thymocytes. This is NF-kappa-B inhibitor delta (NFKBID) from Homo sapiens (Human).